We begin with the raw amino-acid sequence, 459 residues long: Smoothelin-like protein 1 (459 aa).

Positions 1-27 (MEQTEGNSSEDGTTVSPTAGNLETPGS) are enriched in polar residues. The interval 1–314 (MEQTEGNSSE…RPRGPRAQNR (314 aa)) is disordered. 5 stretches are compositionally biased toward basic and acidic residues: residues 42–55 (SDKE…EHLC), 75–105 (DELK…KEDT), 112–168 (DTGK…KEDA), 185–211 (ADVK…KELV), and 221–232 (EQGKENESEERA). Residues 124–154 (NEVREKEEAMLASEKQKVDEKETNLESKEKS) are a coiled coil. Low complexity predominate over residues 260–283 (PESTGETSPSASESSPSEVPGSPT). Positions 287 to 300 (PSEKKKDRAPERRV) are enriched in basic and acidic residues. Residue serine 301 is modified to Phosphoserine; by PKA and PKG. Residues 343 to 449 (GGVKNMLLEW…YIQELYRSLV (107 aa)) enclose the Calponin-homology (CH) domain. The interval 441–459 (IQELYRSLVQKGLVKTKKK) is calmodulin-binding.

This sequence belongs to the smoothelin family. In terms of assembly, interacts with PPP1R12A. In terms of processing, maximal phosphorylation of Ser-301 correlates with maximal relaxation of aorta in response to acetylcholine. As to expression, widely expressed, with highest expression in skeletal muscles (at protein level). Within striated muscles, significantly more expressed in soleus muscle compared with plantaris muscle or white vastus (at protein level). 30-40% lower expression in females than in males (at protein level). Expressed in type 2a fibers, but not detected in fast twitch type 2b muscle white vastus nor in oxidative type I/b heart muscle (at protein level). Expressed within myometrial cells of the uterus, as well as in the endometrial layer. In the aorta, confined to smooth muscle cells. Not detected in endothelial cells.

The protein localises to the cytoplasm. It is found in the myofibril. The protein resides in the sarcomere. It localises to the i band. Its subcellular location is the m line. The protein localises to the nucleus. Its function is as follows. Plays a role in the regulation of contractile properties of both striated and smooth muscles. When unphosphorylated, may inhibit myosin dephosphorylation. Phosphorylation at Ser-301 reduces this inhibitory activity. This chain is Smoothelin-like protein 1 (Smtnl1), found in Mus musculus (Mouse).